A 91-amino-acid polypeptide reads, in one-letter code: Gene 76 protein (91 aa).

The disordered stretch occupies residues 58–81 (ELPSCDESPKGEARRDNDNRDGGK).

The protein is Gene 76 protein (76) of Mycobacterium phage L5 (Mycobacteriophage L5).